A 709-amino-acid chain; its full sequence is Rho guanine nucleotide exchange factor 16 (709 aa).

Position 2 is an N-acetylalanine (Ala2). Phosphoserine occurs at positions 6, 41, and 107. The interval 22–70 is disordered; it reads ELRLDAGGNPASGLPMVRGSPRVRDDAAFQPQVPAPPQPRPPGHEEPWP. Residues 114–146 are disordered; the sequence is SREAARRDPKLLPAPSFSLDDMDVDKDPGGMLR. A phosphoserine mark is found at Ser174, Ser191, and Ser208. The interval 180–246 is disordered; that stretch reads LAEEPSQPHT…ESSSPEGTQK (67 aa). The segment covering 191 to 207 has biased composition (basic residues); it reads SPAKNKKTLGRKRGHKG. Phosphothreonine is present on Thr226. Ser227, Ser230, and Ser240 each carry phosphoserine. The required for RHOG activation and mediates interaction with EPHA2 stretch occupies residues 275–481; the sequence is LDQLSTEERK…MERMEQMYTL (207 aa). In terms of domain architecture, DH spans 284–468; it reads KRQEAMFEIL…SKLVRQCNEG (185 aa). The PH domain occupies 501 to 620; sequence WLLKRGELFL…WIVALTHSER (120 aa). The SH3 domain occupies 629–689; that stretch reads GDLPQVEITK…PEDFARFITS (61 aa). The PDZ-binding motif signature appears at 707–709; it reads TDV.

Interacts with ELMO2, EPHA2, RAC1 and RHOG; mediates activation of RAC1 by EPHA2. Interacts with TAX1BP3 (via PDZ domain). May interact with CDC42; stimulated by HPV16 E6.

It is found in the cytoplasm. Guanyl-nucleotide exchange factor of the RHOG GTPase stimulating the exchange of RHOG-associated GDP for GTP. May play a role in chemotactic cell migration by mediating the activation of RAC1 by EPHA2. May also activate CDC42 and mediate activation of CDC42 by the viral protein HPV16 E6. This Homo sapiens (Human) protein is Rho guanine nucleotide exchange factor 16 (ARHGEF16).